The sequence spans 115 residues: UPF0597 protein HI_0855 (115 aa).

The protein belongs to the UPF0597 family.

In Haemophilus influenzae (strain ATCC 51907 / DSM 11121 / KW20 / Rd), this protein is UPF0597 protein HI_0855.